The chain runs to 366 residues: Methylthioribose-1-phosphate isomerase (366 aa).

D260 functions as the Proton donor in the catalytic mechanism.

It belongs to the eIF-2B alpha/beta/delta subunits family. MtnA subfamily.

The protein localises to the cytoplasm. It localises to the nucleus. The enzyme catalyses 5-(methylsulfanyl)-alpha-D-ribose 1-phosphate = 5-(methylsulfanyl)-D-ribulose 1-phosphate. The protein operates within amino-acid biosynthesis; L-methionine biosynthesis via salvage pathway; L-methionine from S-methyl-5-thio-alpha-D-ribose 1-phosphate: step 1/6. Functionally, catalyzes the interconversion of methylthioribose-1-phosphate (MTR-1-P) into methylthioribulose-1-phosphate (MTRu-1-P). The chain is Methylthioribose-1-phosphate isomerase from Caenorhabditis briggsae.